The chain runs to 382 residues: Gibberellin 2-beta-dioxygenase 1 (382 aa).

The Fe2OG dioxygenase domain occupies 189 to 321 (DSDCLLRINH…RLSTIYFASP (133 aa)). Tyr-199 lines the 2-oxoglutarate pocket. Positions 241, 243, and 302 each coordinate Fe cation. The 2-oxoglutarate site is built by Arg-312 and Ser-314.

The protein belongs to the iron/ascorbate-dependent oxidoreductase family. GA2OX subfamily. The cofactor is L-ascorbate. Fe(2+) serves as cofactor. As to expression, expressed in roots, shoot apex, and in the basal region of leaf primordia and young leaves.

It carries out the reaction gibberellin A1 + 2-oxoglutarate + O2 = gibberellin A8 + succinate + CO2. In terms of biological role, catalyzes the 2-beta-hydroxylation of several biologically active gibberellins, leading to the homeostatic regulation of their endogenous level. Catabolism of gibberellins (GAs) plays a central role in plant development. Controls the level of bioactive GAs in the shoot apical meristem, which regulates the vegetative to reproductive phase transition. In vitro, converts GA1, GA4, GA9, GA20, and GA44 to the corresponding 2-beta-hydroxylated products GA8, GA34, GA51, GA29, and GA98, respectively. In Oryza sativa subsp. japonica (Rice), this protein is Gibberellin 2-beta-dioxygenase 1.